We begin with the raw amino-acid sequence, 367 residues long: Phosphoribosylaminoimidazole-succinocarboxamide synthase (367 aa).

The protein belongs to the SAICAR synthetase family.

The enzyme catalyses 5-amino-1-(5-phospho-D-ribosyl)imidazole-4-carboxylate + L-aspartate + ATP = (2S)-2-[5-amino-1-(5-phospho-beta-D-ribosyl)imidazole-4-carboxamido]succinate + ADP + phosphate + 2 H(+). It participates in purine metabolism; IMP biosynthesis via de novo pathway; 5-amino-1-(5-phospho-D-ribosyl)imidazole-4-carboxamide from 5-amino-1-(5-phospho-D-ribosyl)imidazole-4-carboxylate: step 1/2. The polypeptide is Phosphoribosylaminoimidazole-succinocarboxamide synthase (Shewanella halifaxensis (strain HAW-EB4)).